The primary structure comprises 307 residues: Ribosomal protein L11 methyltransferase (307 aa).

S-adenosyl-L-methionine is bound by residues Thr154, Gly178, Asp200, and Asn242.

Belongs to the methyltransferase superfamily. PrmA family.

The protein resides in the cytoplasm. It carries out the reaction L-lysyl-[protein] + 3 S-adenosyl-L-methionine = N(6),N(6),N(6)-trimethyl-L-lysyl-[protein] + 3 S-adenosyl-L-homocysteine + 3 H(+). In terms of biological role, methylates ribosomal protein L11. The chain is Ribosomal protein L11 methyltransferase from Syntrophotalea carbinolica (strain DSM 2380 / NBRC 103641 / GraBd1) (Pelobacter carbinolicus).